A 33-amino-acid chain; its full sequence is Cytochrome b6-f complex subunit 8 (33 aa).

The chain crosses the membrane as a helical span at residues 2-22; sequence LFTVAWASLAAMFSFSIAMVV.

It belongs to the PetN family. In terms of assembly, the 4 large subunits of the cytochrome b6-f complex are cytochrome b6, subunit IV (17 kDa polypeptide, PetD), cytochrome f and the Rieske protein, while the 4 small subunits are PetG, PetL, PetM and PetN. The complex functions as a dimer.

The protein localises to the cellular thylakoid membrane. In terms of biological role, component of the cytochrome b6-f complex, which mediates electron transfer between photosystem II (PSII) and photosystem I (PSI), cyclic electron flow around PSI, and state transitions. The chain is Cytochrome b6-f complex subunit 8 from Synechococcus sp. (strain CC9902).